We begin with the raw amino-acid sequence, 305 residues long: Methionyl-tRNA formyltransferase (305 aa).

109-112 (SLLP) is a (6S)-5,6,7,8-tetrahydrofolate binding site.

The protein belongs to the Fmt family.

The catalysed reaction is L-methionyl-tRNA(fMet) + (6R)-10-formyltetrahydrofolate = N-formyl-L-methionyl-tRNA(fMet) + (6S)-5,6,7,8-tetrahydrofolate + H(+). Attaches a formyl group to the free amino group of methionyl-tRNA(fMet). The formyl group appears to play a dual role in the initiator identity of N-formylmethionyl-tRNA by promoting its recognition by IF2 and preventing the misappropriation of this tRNA by the elongation apparatus. The sequence is that of Methionyl-tRNA formyltransferase from Roseobacter denitrificans (strain ATCC 33942 / OCh 114) (Erythrobacter sp. (strain OCh 114)).